The sequence spans 492 residues: Glycogen synthase 1 (492 aa).

An ADP-alpha-D-glucose-binding site is contributed by K15.

This sequence belongs to the glycosyltransferase 1 family. Bacterial/plant glycogen synthase subfamily.

The catalysed reaction is [(1-&gt;4)-alpha-D-glucosyl](n) + ADP-alpha-D-glucose = [(1-&gt;4)-alpha-D-glucosyl](n+1) + ADP + H(+). The protein operates within glycan biosynthesis; glycogen biosynthesis. In terms of biological role, synthesizes alpha-1,4-glucan chains using ADP-glucose. The sequence is that of Glycogen synthase 1 from Trichormus variabilis (strain ATCC 29413 / PCC 7937) (Anabaena variabilis).